A 323-amino-acid polypeptide reads, in one-letter code: MDPKSQRVKLNDGHFIPVLGFGTYAPEEVPKSEALEATKFAIEVGFRHVDSAHLYQNEEQVGQAIRSKIADGTVKREDIFYTSKLWCNSLQPELVRPALEKSLQNLQLDYVDLYIIHSPVSLKPGNKFVPKDESGKLIFDSVDLCHTWEALEKCKDAGLTKSIGVSNFNHKQLEKILNKPGLKYKPVCNQVECHPYLNQSKLLEFCKSHDIVLVAYAALGAQLLSEWVNSNNPVLLEDPVLCAIAKKHKQTPALVALRYQVQRGVVVLAKSFNKKRIKENMQVFDFELTPEDMKAIDGLNRNIRYYDFQKGIGHPEYPFSEEY.

NADP(+)-binding positions include G20–Y24 and D50. Y55 acts as the Proton donor in catalysis. H117 lines the substrate pocket. NADP(+) contacts are provided by residues S166–N167, Q190, Y216–A221, and K270–N280.

Belongs to the aldo/keto reductase family. In terms of assembly, monomer. The N-terminus is blocked.

Its subcellular location is the cytoplasm. The enzyme catalyses prostaglandin F2alpha + NADP(+) = prostaglandin D2 + NADPH + H(+). It participates in lipid metabolism; prostaglandin biosynthesis. In terms of biological role, catalyzes the reduction of PGD(2) and PGH(2) to PGF(2 alpha) and a stereoisomer, respectively. It has a broad substrate specificity and also reduces other carbonyl compounds. The polypeptide is Prostaglandin F synthase 1 (Bos taurus (Bovine)).